The following is a 268-amino-acid chain: Hydroxyethylthiazole kinase (268 aa).

Residue M44 participates in substrate binding. The ATP site is built by R119 and S165. Residue G192 participates in substrate binding.

This sequence belongs to the Thz kinase family. Mg(2+) is required as a cofactor.

It carries out the reaction 5-(2-hydroxyethyl)-4-methylthiazole + ATP = 4-methyl-5-(2-phosphooxyethyl)-thiazole + ADP + H(+). It functions in the pathway cofactor biosynthesis; thiamine diphosphate biosynthesis; 4-methyl-5-(2-phosphoethyl)-thiazole from 5-(2-hydroxyethyl)-4-methylthiazole: step 1/1. Catalyzes the phosphorylation of the hydroxyl group of 4-methyl-5-beta-hydroxyethylthiazole (THZ). This Corynebacterium glutamicum (strain R) protein is Hydroxyethylthiazole kinase.